A 548-amino-acid chain; its full sequence is Synaptic vesicle 2-related protein (548 aa).

The Cytoplasmic portion of the chain corresponds to 1–87 (MEEDLFQLRQ…GFGRFQWKLS (87 aa)). Phosphoserine occurs at positions 25 and 31. Residues 88-108 (VLTGLAWMADAMEMMILSILA) traverse the membrane as a helical segment. Topologically, residues 109–122 (PQLHCEWRLPSWQV) are vesicular. Residues 123–143 (ALLTSVVFIGMMSSSTLWGNI) form a helical membrane-spanning segment. Topologically, residues 144-156 (SDQYGRKTGLKIS) are cytoplasmic. Residues 157–177 (VFWTLYYGILSAFAPVYSWIL) traverse the membrane as a helical segment. Topologically, residues 178-180 (VLR) are vesicular. Residues 181-201 (GLVGFGIGGVPQSVTLYAEFL) traverse the membrane as a helical segment. Topologically, residues 202 to 209 (PMKARAKC) are cytoplasmic. Residues 210–230 (ILLIEVFWAIGTVFEVLLAVF) form a helical membrane-spanning segment. The Vesicular segment spans residues 231-238 (VMPSLGWR). A helical transmembrane segment spans residues 239–259 (WLLLLSAAPLLVFAVLCFWLP). Over 260–316 (ESARYDVLSGNQEKAIATLKRIATENGAPMPLGKLIISRQEDRGKMRDLFTPHFRWT) the chain is Cytoplasmic. A helical membrane pass occupies residues 317-337 (TLLLWFIWFSNAFSYYGLVLL). The Vesicular segment spans residues 338–373 (TTELFQAGDVCSISSRKKAVEAKCSLACEYLSKEDY). Residues 374-394 (MDLLWTTLSEFPGVLVTLWVI) form a helical membrane-spanning segment. The Cytoplasmic portion of the chain corresponds to 395 to 401 (DRLGRKK). A helical transmembrane segment spans residues 402-422 (TMALCFVIFSLCSLLLFICIG). The Vesicular portion of the chain corresponds to 423–424 (RN). Residues 425–445 (VLTLLLFIARAFISGGFQAAY) traverse the membrane as a helical segment. The Cytoplasmic segment spans residues 446–457 (VYTPEVYPTATR). Residues 458–478 (ALGLGTCSGMARVGALITPFI) form a helical membrane-spanning segment. The Vesicular segment spans residues 479 to 489 (AQVMLESSVYL). A helical membrane pass occupies residues 490-510 (TLAVYSGCCLLAALASCFLPI). Topologically, residues 511 to 548 (ETKGRALQESSHREWGQEMVGRGTNSTGVPRSNSGSQE) are cytoplasmic. The tract at residues 523-548 (REWGQEMVGRGTNSTGVPRSNSGSQE) is disordered. Residues 533–548 (GTNSTGVPRSNSGSQE) are compositionally biased toward polar residues. Ser542 bears the Phosphoserine mark.

It belongs to the major facilitator superfamily. As to expression, detected in brain (at protein level). Detected in brain, in synaptic layers of the cerebellum, hippocampus and cerebral cortex.

The protein resides in the cytoplasmic vesicle. The protein localises to the secretory vesicle. It is found in the synaptic vesicle membrane. The chain is Synaptic vesicle 2-related protein (Svop) from Rattus norvegicus (Rat).